The following is a 658-amino-acid chain: Carnitine O-palmitoyltransferase 2, mitochondrial (658 aa).

Residues 1 to 26 constitute a mitochondrion transit peptide; it reads MARLLTSSSALRWGAVSSSQSVGRAY. The Mitochondrial matrix portion of the chain corresponds to 27-179; sequence SSGSPDTEYV…GYLEPEIFHL (153 aa). The note=Mitochondrial inner membrane intramembrane region spans 180 to 209; the sequence is NPAKSDTLTFRKLIRFVPSSLSWYGAYMVN. Topologically, residues 210–658 are mitochondrial matrix; that stretch reads AYPLDMSQYF…FTVLQDKPIK (449 aa). His373 serves as the catalytic Proton acceptor. 453–465 contributes to the CoA binding site; the sequence is GKELLKTQKLSPD. (R)-carnitine contacts are provided by Tyr487, Ser489, and Thr500.

This sequence belongs to the carnitine/choline acetyltransferase family.

It is found in the mitochondrion inner membrane. The enzyme catalyses (R)-carnitine + hexadecanoyl-CoA = O-hexadecanoyl-(R)-carnitine + CoA. It carries out the reaction octanoyl-CoA + (R)-carnitine = O-octanoyl-(R)-carnitine + CoA. It catalyses the reaction decanoyl-CoA + (R)-carnitine = O-decanoyl-(R)-carnitine + CoA. The catalysed reaction is dodecanoyl-CoA + (R)-carnitine = O-dodecanoyl-R-carnitine + CoA. The enzyme catalyses tetradecanoyl-CoA + (R)-carnitine = O-tetradecanoyl-(R)-carnitine + CoA. It carries out the reaction (R)-carnitine + octadecanoyl-CoA = O-octadecanoyl-(R)-carnitine + CoA. It catalyses the reaction eicosanoyl-CoA + (R)-carnitine = O-eicosanoyl-(R)-carnitine + CoA. The catalysed reaction is (9Z)-tetradecenoyl-CoA + (R)-carnitine = O-(9Z)-tetradecenoyl-(R)-carnitine + CoA. The enzyme catalyses (5Z)-tetradecenoyl-CoA + (R)-carnitine = O-(5Z)-tetradecenoyl-(R)-carnitine + CoA. It carries out the reaction (R)-carnitine + (9Z)-octadecenoyl-CoA = O-(9Z)-octadecenoyl-(R)-carnitine + CoA. It catalyses the reaction 4,8-dimethylnonanoyl-CoA + (R)-carnitine = O-4,8-dimethylnonanoyl-(R)-carnitine + CoA. Its pathway is lipid metabolism; fatty acid beta-oxidation. Its function is as follows. Involved in the intramitochondrial synthesis of acylcarnitines from accumulated acyl-CoA metabolites. Reconverts acylcarnitines back into the respective acyl-CoA esters that can then undergo beta-oxidation, an essential step for the mitochondrial uptake of long-chain fatty acids and their subsequent beta-oxidation in the mitochondrion. Active with medium (C8-C12) and long-chain (C14-C18) acyl-CoA esters. The sequence is that of Carnitine O-palmitoyltransferase 2, mitochondrial (cpt2) from Xenopus tropicalis (Western clawed frog).